Reading from the N-terminus, the 662-residue chain is Envelope glycoprotein (662 aa).

Residues 1–34 form the signal peptide; that stretch reads MESPTHPKPSKDKTLSWNLVFLVGILFTIDIGMA. Residues 35–606 are Extracellular-facing; the sequence is NPSPHQVYNV…FNKSPWFTTL (572 aa). N-linked (GlcNAc...) asparagine; by host glycosylation is found at asparagine 43 and asparagine 58. Disulfide bonds link cysteine 115-cysteine 132 and cysteine 124-cysteine 137. The tract at residues 245 to 279 is disordered; it reads AMGPNLVLPDQKPPSRQSQIESRVTPHHSQGNGGT. The span at 258 to 274 shows a compositional bias: polar residues; that stretch reads PSRQSQIESRVTPHHSQ. Asparagine 286, asparagine 322, and asparagine 327 each carry an N-linked (GlcNAc...) asparagine; by host glycan. Cystine bridges form between cysteine 332–cysteine 335, cysteine 332–cysteine 559, and cysteine 551–cysteine 558. Residues 332–335 carry the CXXC motif; that stretch reads CWLC. Asparagine 351, asparagine 354, asparagine 394, asparagine 410, and asparagine 430 each carry an N-linked (GlcNAc...) asparagine; by host glycan. Residues 468–488 are fusion peptide; it reads ISLTVALMLGGLTVGGIAAGV. 2 coiled-coil regions span residues 496–545 and 555–591; these read IETA…ILFL and KEEC…SQQG. Residues 534 to 550 are immunosuppression; sequence LQNRRGLDILFLQEGGL. Positions 551-559 match the CX6CC motif; the sequence is CAALKEECC. Residues 607–627 traverse the membrane as a helical segment; it reads ISSIMGPLLILLLILLFGPCI. The S-palmitoyl cysteine; by host moiety is linked to residue cysteine 626. The Cytoplasmic portion of the chain corresponds to 628-662; sequence LNRLVQFVKDRISVVQALILTQQYQQIKQYDPDRP.

In terms of assembly, the mature envelope protein (Env) consists of a trimer of SU-TM heterodimers attached by a labile interchain disulfide bond. Post-translationally, specific enzymatic cleavages in vivo yield mature proteins. Envelope glycoproteins are synthesized as an inactive precursor that is N-glycosylated and processed likely by host cell furin or by a furin-like protease in the Golgi to yield the mature SU and TM proteins. The cleavage site between SU and TM requires the minimal sequence [KR]-X-[KR]-R. The R-peptide is released from the C-terminus of the cytoplasmic tail of the TM protein upon particle formation as a result of proteolytic cleavage by the viral protease. Cleavage of this peptide is required for TM to become fusogenic. The CXXC motif is highly conserved across a broad range of retroviral envelope proteins. It is thought to participate in the formation of a labile disulfide bond possibly with the CX6CC motif present in the transmembrane protein. Isomerization of the intersubunit disulfide bond to an SU intrachain disulfide bond is thought to occur upon receptor recognition in order to allow membrane fusion. In terms of processing, the transmembrane protein is palmitoylated. Post-translationally, the R-peptide is palmitoylated.

It is found in the virion membrane. It localises to the host cell membrane. Functionally, the surface protein (SU) attaches the virus to the host cell by binding to its receptor. This interaction triggers the refolding of the transmembrane protein (TM) and is thought to activate its fusogenic potential by unmasking its fusion peptide. Fusion occurs at the host cell plasma membrane. In terms of biological role, the transmembrane protein (TM) acts as a class I viral fusion protein. Under the current model, the protein has at least 3 conformational states: pre-fusion native state, pre-hairpin intermediate state, and post-fusion hairpin state. During viral and target cell membrane fusion, the coiled coil regions (heptad repeats) assume a trimer-of-hairpins structure, positioning the fusion peptide in close proximity to the C-terminal region of the ectodomain. The formation of this structure appears to drive apposition and subsequent fusion of viral and target cell membranes. Membranes fusion leads to delivery of the nucleocapsid into the cytoplasm. The protein is Envelope glycoprotein (env) of Felidae (cat family).